We begin with the raw amino-acid sequence, 273 residues long: uncharacterized protein (273 aa).

The next 2 membrane-spanning stretches (helical) occupy residues 24-44 (VGVSAIDGLIAAVVAGPVTIL) and 103-123 (IVGPWAIGFSLGLSLGGEAWA). A disordered region spans residues 132–194 (SDLPHHGRQS…QPPAQTQPYR (63 aa)). The segment covering 164 to 179 (SSHHIRSPAVARHHKT) has biased composition (basic residues). The segment covering 183–192 (TTQPPAQTQP) has biased composition (low complexity).

It is found in the cell membrane. This is an uncharacterized protein from Sinorhizobium fredii (strain NBRC 101917 / NGR234).